The sequence spans 96 residues: UPF0235 protein YggU (96 aa).

It belongs to the UPF0235 family.

The protein is UPF0235 protein YggU of Escherichia coli O157:H7.